We begin with the raw amino-acid sequence, 138 residues long: Probable prefoldin subunit 4 (138 aa).

Belongs to the prefoldin subunit beta family. In terms of assembly, heterohexamer of two PFD-alpha type and four PFD-beta type subunits.

Functionally, binds specifically to cytosolic chaperonin (c-CPN) and transfers target proteins to it. Binds to nascent polypeptide chain and promotes folding in an environment in which there are many competing pathways for nonnative proteins. The sequence is that of Probable prefoldin subunit 4 from Drosophila melanogaster (Fruit fly).